A 376-amino-acid chain; its full sequence is Chaperone protein DnaJ (376 aa).

One can recognise a J domain in the interval 5–70 (DFYETLGVAK…QKRAAYDRYG (66 aa)). The segment at 137–215 (GKTAQIRVPT…CHGQGRVTEE (79 aa)) adopts a CR-type zinc-finger fold. Zn(2+) is bound by residues Cys150, Cys153, Cys167, Cys170, Cys189, Cys192, Cys203, and Cys206. CXXCXGXG motif repeat units lie at residues 150–157 (CDVCSGSG), 167–174 (CGTCQGSG), 189–196 (CPTCHGRG), and 203–210 (CPKCHGQG).

It belongs to the DnaJ family. As to quaternary structure, homodimer. Requires Zn(2+) as cofactor.

Its subcellular location is the cytoplasm. Functionally, participates actively in the response to hyperosmotic and heat shock by preventing the aggregation of stress-denatured proteins and by disaggregating proteins, also in an autonomous, DnaK-independent fashion. Unfolded proteins bind initially to DnaJ; upon interaction with the DnaJ-bound protein, DnaK hydrolyzes its bound ATP, resulting in the formation of a stable complex. GrpE releases ADP from DnaK; ATP binding to DnaK triggers the release of the substrate protein, thus completing the reaction cycle. Several rounds of ATP-dependent interactions between DnaJ, DnaK and GrpE are required for fully efficient folding. Also involved, together with DnaK and GrpE, in the DNA replication of plasmids through activation of initiation proteins. This is Chaperone protein DnaJ from Rhizobium leguminosarum bv. trifolii (strain WSM2304).